The sequence spans 221 residues: F-box protein At1g55000 (221 aa).

Residues 7–46 (DTLIIIFQKLTVADLARASCVCKVWNSVATEDDLVVSAFT) enclose the F-box domain. One can recognise a LysM domain in the interval 74 to 118 (ISHRICRGDSVTSLAVKYAVQVMDIKRLNNMMSDHGIYSRDRLLI).

In terms of assembly, part of a SCF (ASK-cullin-F-box) protein ligase complex. Interacts with SKP1A/ASK1, SKP1B/ASK2, ASK4, ASK11 and ASK13.

It participates in protein modification; protein ubiquitination. Its function is as follows. Component of SCF(ASK-cullin-F-box) E3 ubiquitin ligase complexes, which may mediate the ubiquitination and subsequent proteasomal degradation of target proteins. This is F-box protein At1g55000 from Arabidopsis thaliana (Mouse-ear cress).